The chain runs to 546 residues: Chaperonin GroEL (546 aa).

ATP is bound by residues 29–32 (TLGP), K50, 86–90 (DGTTT), G415, and D495.

It belongs to the chaperonin (HSP60) family. As to quaternary structure, forms a cylinder of 14 subunits composed of two heptameric rings stacked back-to-back. Interacts with the co-chaperonin GroES.

It is found in the cytoplasm. It carries out the reaction ATP + H2O + a folded polypeptide = ADP + phosphate + an unfolded polypeptide.. In terms of biological role, together with its co-chaperonin GroES, plays an essential role in assisting protein folding. The GroEL-GroES system forms a nano-cage that allows encapsulation of the non-native substrate proteins and provides a physical environment optimized to promote and accelerate protein folding. This Parabacteroides distasonis (strain ATCC 8503 / DSM 20701 / CIP 104284 / JCM 5825 / NCTC 11152) protein is Chaperonin GroEL.